Reading from the N-terminus, the 73-residue chain is U3-agatoxin-Ao1j (73 aa).

The first 20 residues, 1 to 20 (MRTIISLLLLSAMVFAVIEA), serve as a signal peptide directing secretion. The propeptide occupies 21-34 (ISLEEGLQLFEGER). 4 cysteine pairs are disulfide-bonded: Cys36/Cys52, Cys43/Cys57, Cys51/Cys67, and Cys59/Cys65. Ser71 carries the post-translational modification Serine amide.

Belongs to the neurotoxin 07 (Beta/delta-agtx) family. 03 (aga-4) subfamily. Aga sub-subfamily. Expressed by the venom gland.

The protein localises to the secreted. Insecticidal neurotoxin that induces an irreversible spastic paralysis when injected into insects. Modifies presynaptic voltage-gated sodium channels (Nav), causing them to open at the normal resting potential of the nerve. This leads to spontaneous release of neurotransmitter and repetitive action potentials in motor neurons. The polypeptide is U3-agatoxin-Ao1j (Agelena orientalis (Funnel-web spider)).